A 102-amino-acid polypeptide reads, in one-letter code: Small ribosomal subunit protein bS6 (102 aa).

This sequence belongs to the bacterial ribosomal protein bS6 family.

Binds together with bS18 to 16S ribosomal RNA. This chain is Small ribosomal subunit protein bS6, found in Desulfovibrio desulfuricans (strain ATCC 27774 / DSM 6949 / MB).